The sequence spans 104 residues: UPF0145 protein STH1265 (104 aa).

This sequence belongs to the UPF0145 family.

The sequence is that of UPF0145 protein STH1265 from Symbiobacterium thermophilum (strain DSM 24528 / JCM 14929 / IAM 14863 / T).